Consider the following 89-residue polypeptide: UPF0367 protein CYA_1023 (89 aa).

The segment at 69 to 89 is disordered; sequence TKSGGPGAPGTRPGFLAQLQG.

This sequence belongs to the UPF0367 family.

The chain is UPF0367 protein CYA_1023 from Synechococcus sp. (strain JA-3-3Ab) (Cyanobacteria bacterium Yellowstone A-Prime).